The sequence spans 527 residues: Light-independent protochlorophyllide reductase subunit B (527 aa).

Residue D36 participates in [4Fe-4S] cluster binding. The active-site Proton donor is the D290. 425 to 426 (GL) is a binding site for substrate.

This sequence belongs to the ChlB/BchB/BchZ family. In terms of assembly, protochlorophyllide reductase is composed of three subunits; ChlL, ChlN and ChlB. Forms a heterotetramer of two ChlB and two ChlN subunits. [4Fe-4S] cluster serves as cofactor.

It carries out the reaction chlorophyllide a + oxidized 2[4Fe-4S]-[ferredoxin] + 2 ADP + 2 phosphate = protochlorophyllide a + reduced 2[4Fe-4S]-[ferredoxin] + 2 ATP + 2 H2O. Its pathway is porphyrin-containing compound metabolism; chlorophyll biosynthesis (light-independent). Its function is as follows. Component of the dark-operative protochlorophyllide reductase (DPOR) that uses Mg-ATP and reduced ferredoxin to reduce ring D of protochlorophyllide (Pchlide) to form chlorophyllide a (Chlide). This reaction is light-independent. The NB-protein (ChlN-ChlB) is the catalytic component of the complex. This Synechococcus sp. (strain RCC307) protein is Light-independent protochlorophyllide reductase subunit B.